Consider the following 233-residue polypeptide: Small ribosomal subunit protein uS3 (233 aa).

One can recognise a KH type-2 domain in the interval 39 to 107; that stretch reads VRQFLNKELE…PAQINIAEVR (69 aa).

The protein belongs to the universal ribosomal protein uS3 family. In terms of assembly, part of the 30S ribosomal subunit. Forms a tight complex with proteins S10 and S14.

Functionally, binds the lower part of the 30S subunit head. Binds mRNA in the 70S ribosome, positioning it for translation. The protein is Small ribosomal subunit protein uS3 of Edwardsiella ictaluri (strain 93-146).